A 445-amino-acid polypeptide reads, in one-letter code: MASNGVTNCNANANVWRFKGNGATSDAAAVTLRKLAFGMFKNCTMNSGKTILFPTPGEPSAHSNFRTCPEAEEAVAAAARSGMANSYAPSPGVFKARRAVAEYLNGELPTKLKAEDVYITGGCNQAIEIVIDSLAGNPSANILLPRPGYPHYDARAVYSGLEIRKYDLLPESDWEINLDGLEAAADENTVAMVIINPNNPCGNVYTYDHLNKVAEMARKLGIMIISDEVYDHVVYGDKPFIPMGKFASIAPVITLGSISKGWVNPGWRVGWIAMNDPNGIFVSTGVVQAIEDFLDLTPQPSFILQEALPDILEKTPKEFFEKKIKAMRRNVELSCERLKDIPCLFCPKKPESCSYLWLKLDTSMLNNIKNDFDFCTKLVSEESLILIPGVALGAENWVRISIGTDESVVQEIFDRLKGFYDRHAISKEAIKLSGHAINQIVVSVN.

The protein belongs to the class-I pyridoxal-phosphate-dependent aminotransferase family. Requires pyridoxal 5'-phosphate as cofactor. As to expression, expressed in roots, leaves and cauline leaves.

The polypeptide is Probable aminotransferase TAT3 (TAT3) (Arabidopsis thaliana (Mouse-ear cress)).